We begin with the raw amino-acid sequence, 190 residues long: Xanthine phosphoribosyltransferase (190 aa).

Xanthine-binding residues include leucine 20 and asparagine 27. 128-132 (ANGKA) provides a ligand contact to 5-phospho-alpha-D-ribose 1-diphosphate. Lysine 156 provides a ligand contact to xanthine.

This sequence belongs to the purine/pyrimidine phosphoribosyltransferase family. Xpt subfamily. In terms of assembly, homodimer.

It localises to the cytoplasm. The catalysed reaction is XMP + diphosphate = xanthine + 5-phospho-alpha-D-ribose 1-diphosphate. The protein operates within purine metabolism; XMP biosynthesis via salvage pathway; XMP from xanthine: step 1/1. Its function is as follows. Converts the preformed base xanthine, a product of nucleic acid breakdown, to xanthosine 5'-monophosphate (XMP), so it can be reused for RNA or DNA synthesis. The sequence is that of Xanthine phosphoribosyltransferase from Finegoldia magna (strain ATCC 29328 / DSM 20472 / WAL 2508) (Peptostreptococcus magnus).